A 540-amino-acid chain; its full sequence is Eukaryotic translation initiation factor 3 subunit L (540 aa).

A PCI domain is found at 307–515 (TFSDILLYIQ…IHIADTKVSH (209 aa)).

Belongs to the eIF-3 subunit L family. In terms of assembly, component of the eukaryotic translation initiation factor 3 (eIF-3) complex. The eIF-3 complex interacts with pix.

The protein resides in the cytoplasm. Functionally, component of the eukaryotic translation initiation factor 3 (eIF-3) complex, which is involved in protein synthesis of a specialized repertoire of mRNAs and, together with other initiation factors, stimulates binding of mRNA and methionyl-tRNAi to the 40S ribosome. The eIF-3 complex specifically targets and initiates translation of a subset of mRNAs involved in cell proliferation. In Drosophila grimshawi (Hawaiian fruit fly), this protein is Eukaryotic translation initiation factor 3 subunit L.